We begin with the raw amino-acid sequence, 200 residues long: Arylesterase (200 aa).

An N-terminal signal peptide occupies residues 1–19 (MIRLLSLVLFFCLSAASQA). Ser-29 acts as the Nucleophile in catalysis. Catalysis depends on residues Asp-176 and His-179.

Belongs to the 'GDSL' lipolytic enzyme family. As to quaternary structure, homodimer.

The enzyme catalyses a phenyl acetate + H2O = a phenol + acetate + H(+). Its function is as follows. Favors the hydrolysis of several arylesters. In Vibrio mimicus, this protein is Arylesterase.